The sequence spans 817 residues: Protein-glutamine gamma-glutamyltransferase K (817 aa).

Disordered stretches follow at residues Met-1–Gly-38 and Asp-59–Ile-105. A membrane anchorage region region spans residues Met-1 to Ala-100. Pro residues predominate over residues Leu-17–Glu-26. Thr-22 is modified (phosphothreonine). Phosphoserine is present on residues Ser-24, Ser-68, Ser-82, Ser-85, Ser-92, and Ser-95. Over residues Arg-71 to Gly-84 the composition is skewed to low complexity. Active-site residues include Cys-377, His-436, and Asp-459. Residues Asn-499, Asp-501, Glu-548, and Glu-553 each coordinate Ca(2+). The interval Gly-793–Ala-817 is disordered.

It belongs to the transglutaminase superfamily. Transglutaminase family. Interacts with PLAAT4. Ca(2+) serves as cofactor. In terms of processing, palmitoylated. Post-translationally, the membrane anchorage region possesses a cluster of five cysteines within which fatty acid(s) may become thioester-linked. It is subject to phorbol ester-stimulated phosphorylation and is hypersensitive to proteolysis, which releases the enzyme in a soluble form. Tyrosine-phosphorylated.

The protein localises to the membrane. It carries out the reaction L-glutaminyl-[protein] + L-lysyl-[protein] = [protein]-L-lysyl-N(6)-5-L-glutamyl-[protein] + NH4(+). Functionally, catalyzes the cross-linking of proteins and the conjugation of polyamines to proteins. Responsible for cross-linking epidermal proteins during formation of the stratum corneum. Involved in cell proliferation. This Homo sapiens (Human) protein is Protein-glutamine gamma-glutamyltransferase K (TGM1).